The sequence spans 355 residues: Phytoene synthase (355 aa).

This sequence belongs to the phytoene/squalene synthase family. Requires ATP as cofactor. It depends on Mn(2+) as a cofactor. Mg(2+) is required as a cofactor.

It participates in carotenoid biosynthesis; phytoene biosynthesis. Its function is as follows. Involved in the biosynthesis of carotenoids. Catalyzes the condensation of two molecules of geranylgeranyl diphosphate (GGPP) to give prephytoene diphosphate (PPPP) and the subsequent rearrangement of the cyclopropylcarbinyl intermediate to yield phytoene. The polypeptide is Phytoene synthase (crtB) (Cereibacter sphaeroides (strain ATCC 17023 / DSM 158 / JCM 6121 / CCUG 31486 / LMG 2827 / NBRC 12203 / NCIMB 8253 / ATH 2.4.1.) (Rhodobacter sphaeroides)).